The following is a 441-amino-acid chain: Methylenetetrahydrofolate--tRNA-(uracil-5-)-methyltransferase TrmFO (441 aa).

7–12 (GAGLSG) serves as a coordination point for FAD.

This sequence belongs to the MnmG family. TrmFO subfamily. FAD is required as a cofactor.

The protein localises to the cytoplasm. The catalysed reaction is uridine(54) in tRNA + (6R)-5,10-methylene-5,6,7,8-tetrahydrofolate + NADH + H(+) = 5-methyluridine(54) in tRNA + (6S)-5,6,7,8-tetrahydrofolate + NAD(+). It carries out the reaction uridine(54) in tRNA + (6R)-5,10-methylene-5,6,7,8-tetrahydrofolate + NADPH + H(+) = 5-methyluridine(54) in tRNA + (6S)-5,6,7,8-tetrahydrofolate + NADP(+). In terms of biological role, catalyzes the folate-dependent formation of 5-methyl-uridine at position 54 (M-5-U54) in all tRNAs. This chain is Methylenetetrahydrofolate--tRNA-(uracil-5-)-methyltransferase TrmFO, found in Pseudothermotoga lettingae (strain ATCC BAA-301 / DSM 14385 / NBRC 107922 / TMO) (Thermotoga lettingae).